Consider the following 271-residue polypeptide: Formamidopyrimidine-DNA glycosylase (271 aa).

P2 (schiff-base intermediate with DNA) is an active-site residue. E3 functions as the Proton donor in the catalytic mechanism. The Proton donor; for beta-elimination activity role is filled by K58. DNA-binding residues include H92, R111, and K152. The FPG-type zinc-finger motif lies at 237–271 (YVYGKVQKPCKICNNIITLIRQNGRSTYFCNACQN). The Proton donor; for delta-elimination activity role is filled by R261.

This sequence belongs to the FPG family. As to quaternary structure, monomer. Zn(2+) is required as a cofactor.

The enzyme catalyses Hydrolysis of DNA containing ring-opened 7-methylguanine residues, releasing 2,6-diamino-4-hydroxy-5-(N-methyl)formamidopyrimidine.. It carries out the reaction 2'-deoxyribonucleotide-(2'-deoxyribose 5'-phosphate)-2'-deoxyribonucleotide-DNA = a 3'-end 2'-deoxyribonucleotide-(2,3-dehydro-2,3-deoxyribose 5'-phosphate)-DNA + a 5'-end 5'-phospho-2'-deoxyribonucleoside-DNA + H(+). Functionally, involved in base excision repair of DNA damaged by oxidation or by mutagenic agents. Acts as a DNA glycosylase that recognizes and removes damaged bases. Has a preference for oxidized purines, such as 7,8-dihydro-8-oxoguanine (8-oxoG). Has AP (apurinic/apyrimidinic) lyase activity and introduces nicks in the DNA strand. Cleaves the DNA backbone by beta-delta elimination to generate a single-strand break at the site of the removed base with both 3'- and 5'-phosphates. The polypeptide is Formamidopyrimidine-DNA glycosylase (Wolbachia pipientis wMel).